The sequence spans 20 residues: Poneritoxin (20 aa).

Met18 carries the post-translational modification Methionine sulfoxide; in form U1-PONTX-Dq3c. Lys19 bears the Lysine amide; in form U1-PONTX-Dq3a and U1-PONTX-Dq3c mark.

The peptide spanning residues 2 to 19 occurs in 3 forms and has been given 3 different names. U1-PONTX-Dq3a has an amidated Lys-19, U1-PONTX-Dq3c has an amidated Lys-19 and an oxidized Met-18, and U1-PONTX-Dq3b has no modifications at either Met-18 or Lys-19. As to expression, expressed by the venom gland.

The protein resides in the secreted. May have antimicrobial properties, like most ant linear peptides. The sequence is that of Poneritoxin from Dinoponera quadriceps (South American ant).